Reading from the N-terminus, the 236-residue chain is L-aspartate dehydrogenase (236 aa).

NAD(+) is bound by residues 10–11 (AI), D31, 58–59 (AS), Y66, 80–81 (LS), A111, and N162. H189 is an active-site residue. 212 to 215 (NPKT) contacts NAD(+).

Belongs to the L-aspartate dehydrogenase family. As to quaternary structure, homodimer.

It catalyses the reaction L-aspartate + NADP(+) + H2O = oxaloacetate + NH4(+) + NADPH + H(+). It carries out the reaction L-aspartate + NAD(+) + H2O = oxaloacetate + NH4(+) + NADH + H(+). It participates in cofactor biosynthesis; NAD(+) biosynthesis; iminoaspartate from L-aspartate (dehydrogenase route): step 1/1. Specifically catalyzes the NAD or NADP-dependent dehydrogenation of L-aspartate to iminoaspartate. This chain is L-aspartate dehydrogenase, found in Archaeoglobus fulgidus (strain ATCC 49558 / DSM 4304 / JCM 9628 / NBRC 100126 / VC-16).